A 167-amino-acid polypeptide reads, in one-letter code: uncharacterized protein (167 aa).

This is an uncharacterized protein from Acidianus convivator (ATV).